The sequence spans 269 residues: F-box protein At5g52880 (269 aa).

The region spanning 109–155 is the F-box domain; the sequence is DIDIPSLPQDILIHIFSFLEISSLVSSAQVSRSWNQATHENSLWQSQ.

In Arabidopsis thaliana (Mouse-ear cress), this protein is F-box protein At5g52880.